Consider the following 447-residue polypeptide: Zinc finger protein ZIC 1 (447 aa).

Residues 225–260 (LICKWIEPEQLANPKKSCNKTFSTMHELVTHVTVEH) form a C2H2-type 1; atypical zinc finger. The C2H2-type 2; atypical zinc finger occupies 269–296 (HICFWEECPREGKPFKAKYKLVNHIRVH). 3 C2H2-type zinc fingers span residues 302–326 (FPCPFPGCGKVFARSENLKIHKRTH), 332–356 (FKCEFEGCDRRFANSSDRKKHMHVH), and 362–384 (YLCKMCDKSYTHPSSLRKHMKVH). The tract at residues 375 to 431 (SSLRKHMKVHESSSQGSQPSPAASSGYESSTPPTIVSPSTDNPTTSSLSPSSSAVHH) is disordered. Positions 386–427 (SSSQGSQPSPAASSGYESSTPPTIVSPSTDNPTTSSLSPSSS) are enriched in low complexity.

It belongs to the GLI C2H2-type zinc-finger protein family. In terms of assembly, interacts (via the C2H2-type domains 3, 4 and 5) with MDFIC (via the C2H2-type domains 3, 4 and 5). Interacts with GLI1; the interaction enhances transcription activation. Interacts with GLI2. Interacts with GLI3; the interaction enhances transcription activation. As to expression, CNS. A high level expression is seen in the cerebellum. Detected in the nuclei of the cerebellar granule cell lineage from the progenitor cells of the external germinal layer to the postmigrated cells of the internal granular layer. Detected in medulloblastoma (26/29 cases), but not present in all other tumors examined.

The protein localises to the nucleus. It localises to the cytoplasm. Its function is as follows. Acts as a transcriptional activator. Involved in neurogenesis. Plays important roles in the early stage of organogenesis of the CNS, as well as during dorsal spinal cord development and maturation of the cerebellum. Involved in the spatial distribution of mossy fiber (MF) neurons within the pontine gray nucleus (PGN). Plays a role in the regulation of MF axon pathway choice. Promotes MF migration towards ipsilaterally-located cerebellar territories. May have a role in shear flow mechanotransduction in osteocytes. Retains nuclear GLI1 and GLI3 in the cytoplasm. Binds to the minimal GLI-consensus sequence 5'-TGGGTGGTC-3'. The chain is Zinc finger protein ZIC 1 (ZIC1) from Homo sapiens (Human).